Consider the following 730-residue polypeptide: ABC transporter G family member 3 (730 aa).

Positions 1–28 (MEEIQSQSDLYRSSSSSASSPTSRVPSS) are enriched in low complexity. Residues 1 to 100 (MEEIQSQSDL…MASPPVPEGG (100 aa)) are disordered. A compositionally biased stretch (acidic residues) spans 47–56 (DSPEWEDTPD). The segment covering 72–91 (NDATTTPVSPSLSKMNSGSM) has biased composition (polar residues). Residue S93 is modified to Phosphoserine. The region spanning 114-356 (IAWKDLTVTM…FSNAGFPCPI (243 aa)) is the ABC transporter domain. 151 to 158 (GPAKSGKS) is an ATP binding site. In terms of domain architecture, ABC transmembrane type-2 spans 441–653 (TRVAVLTWRS…SIEGLLENEY (213 aa)). Transmembrane regions (helical) follow at residues 465-485 (LILYMILTLSIGTLYSGLGHS), 495-515 (AVFVFVSFASLLGIAGIPSLL), 532-552 (AFVFLLGQFLGSIPFLFLMSI), 575-595 (VLNFFMCLLVNEGLMLFIACI), 600-620 (YWSTLTLISVHVIMMLAAGHF), and 689-709 (MLVLLAMAFGYRLLVYVLLRF).

Belongs to the ABC transporter superfamily. ABCG family. Eye pigment precursor importer (TC 3.A.1.204) subfamily.

It is found in the membrane. In Arabidopsis thaliana (Mouse-ear cress), this protein is ABC transporter G family member 3 (ABCG3).